Reading from the N-terminus, the 455-residue chain is Bifunctional protein GlmU (455 aa).

The interval 1–226 (MSLDIVILAA…AMEVQGANDR (226 aa)) is pyrophosphorylase. UDP-N-acetyl-alpha-D-glucosamine contacts are provided by residues 8 to 11 (LAAG), Lys-22, Gln-73, 78 to 79 (GT), 99 to 101 (YGD), Gly-136, Glu-151, Asn-166, and Asn-224. Mg(2+) is bound at residue Asp-101. Asn-224 lines the Mg(2+) pocket. Positions 227-247 (KQLSELERHYQMREARRLMAA) are linker. Residues 248–455 (GVTLRDPARF…WKRPVKISKD (208 aa)) form an N-acetyltransferase region. UDP-N-acetyl-alpha-D-glucosamine is bound by residues Arg-330 and Lys-348. His-360 functions as the Proton acceptor in the catalytic mechanism. UDP-N-acetyl-alpha-D-glucosamine contacts are provided by Tyr-363 and Asn-374. Residues Ala-377, 383–384 (NY), Ser-402, Ala-420, and Arg-437 each bind acetyl-CoA.

The protein in the N-terminal section; belongs to the N-acetylglucosamine-1-phosphate uridyltransferase family. In the C-terminal section; belongs to the transferase hexapeptide repeat family. In terms of assembly, homotrimer. Mg(2+) is required as a cofactor.

The protein localises to the cytoplasm. It carries out the reaction alpha-D-glucosamine 1-phosphate + acetyl-CoA = N-acetyl-alpha-D-glucosamine 1-phosphate + CoA + H(+). It catalyses the reaction N-acetyl-alpha-D-glucosamine 1-phosphate + UTP + H(+) = UDP-N-acetyl-alpha-D-glucosamine + diphosphate. Its pathway is nucleotide-sugar biosynthesis; UDP-N-acetyl-alpha-D-glucosamine biosynthesis; N-acetyl-alpha-D-glucosamine 1-phosphate from alpha-D-glucosamine 6-phosphate (route II): step 2/2. The protein operates within nucleotide-sugar biosynthesis; UDP-N-acetyl-alpha-D-glucosamine biosynthesis; UDP-N-acetyl-alpha-D-glucosamine from N-acetyl-alpha-D-glucosamine 1-phosphate: step 1/1. It functions in the pathway bacterial outer membrane biogenesis; LPS lipid A biosynthesis. In terms of biological role, catalyzes the last two sequential reactions in the de novo biosynthetic pathway for UDP-N-acetylglucosamine (UDP-GlcNAc). The C-terminal domain catalyzes the transfer of acetyl group from acetyl coenzyme A to glucosamine-1-phosphate (GlcN-1-P) to produce N-acetylglucosamine-1-phosphate (GlcNAc-1-P), which is converted into UDP-GlcNAc by the transfer of uridine 5-monophosphate (from uridine 5-triphosphate), a reaction catalyzed by the N-terminal domain. The protein is Bifunctional protein GlmU of Pseudomonas syringae pv. syringae (strain B728a).